The chain runs to 548 residues: Tylosin resistance ATP-binding protein TlrC (548 aa).

ABC transporter domains follow at residues 9-265 (LSLH…RRRQ) and 347-547 (IATA…VSGA). Residues 41 to 48 (GDNGAGKS) and 387 to 394 (GPNGAGKS) contribute to the ATP site.

Belongs to the ABC transporter superfamily.

The protein resides in the cell membrane. Responsible for tylosin resistance, and is proposed to be a subunit of a multicomponent export system for the energy-dependent efflux of tylosin. The protein is Tylosin resistance ATP-binding protein TlrC (tlrC) of Streptomyces fradiae (Streptomyces roseoflavus).